A 298-amino-acid polypeptide reads, in one-letter code: Lipoyl synthase (298 aa).

The [4Fe-4S] cluster site is built by Cys-40, Cys-45, Cys-51, Cys-67, Cys-71, Cys-74, and Ser-280. The region spanning 53–269 (AVRKTATFMI…KEIALSKGFS (217 aa)) is the Radical SAM core domain.

Belongs to the radical SAM superfamily. Lipoyl synthase family. [4Fe-4S] cluster serves as cofactor.

Its subcellular location is the cytoplasm. The catalysed reaction is [[Fe-S] cluster scaffold protein carrying a second [4Fe-4S](2+) cluster] + N(6)-octanoyl-L-lysyl-[protein] + 2 oxidized [2Fe-2S]-[ferredoxin] + 2 S-adenosyl-L-methionine + 4 H(+) = [[Fe-S] cluster scaffold protein] + N(6)-[(R)-dihydrolipoyl]-L-lysyl-[protein] + 4 Fe(3+) + 2 hydrogen sulfide + 2 5'-deoxyadenosine + 2 L-methionine + 2 reduced [2Fe-2S]-[ferredoxin]. It functions in the pathway protein modification; protein lipoylation via endogenous pathway; protein N(6)-(lipoyl)lysine from octanoyl-[acyl-carrier-protein]. Catalyzes the radical-mediated insertion of two sulfur atoms into the C-6 and C-8 positions of the octanoyl moiety bound to the lipoyl domains of lipoate-dependent enzymes, thereby converting the octanoylated domains into lipoylated derivatives. The polypeptide is Lipoyl synthase (Bacillus thuringiensis (strain Al Hakam)).